A 222-amino-acid chain; its full sequence is Small ribosomal subunit protein eS8z (222 aa).

Disordered stretches follow at residues 1 to 37 and 125 to 147; these read MGISRDSIHKRRATGGKQKQWRKKRKYEMGRQPANTK and KKKSASSTKKDGEEGEEAAVAAP. A compositionally biased stretch (basic residues) spans 8–26; sequence IHKRRATGGKQKQWRKKRK.

This sequence belongs to the eukaryotic ribosomal protein eS8 family.

The polypeptide is Small ribosomal subunit protein eS8z (RPS8A) (Arabidopsis thaliana (Mouse-ear cress)).